The sequence spans 148 residues: Small ribosomal subunit protein uS13 (148 aa).

The protein belongs to the universal ribosomal protein uS13 family. Part of the 30S ribosomal subunit. Forms a loose heterodimer with protein S19. Forms two bridges to the 50S subunit in the 70S ribosome.

Located at the top of the head of the 30S subunit, it contacts several helices of the 16S rRNA. In the 70S ribosome it contacts the 23S rRNA (bridge B1a) and protein L5 of the 50S subunit (bridge B1b), connecting the 2 subunits; these bridges are implicated in subunit movement. This chain is Small ribosomal subunit protein uS13, found in Pyrococcus abyssi (strain GE5 / Orsay).